The sequence spans 198 residues: GTP-binding protein Di-Ras1 (198 aa).

GTP contacts are provided by residues 17–22, 33–39, 61–65, 121–125, Ala-151, and 151–152; these read GVGKSS, RDTYIPT, DTTGS, NKCDE, and AK. An Effector region motif is present at residues 36 to 44; that stretch reads YIPTIEDTY. The residue at position 195 (Cys-195) is a Cysteine methyl ester. The S-geranylgeranyl cysteine moiety is linked to residue Cys-195. A propeptide spans 196–198 (removed in mature form); sequence ALM.

Belongs to the small GTPase superfamily. Di-Ras family.

It localises to the cell membrane. Its function is as follows. Displays low GTPase activity and exists predominantly in the GTP-bound form. The polypeptide is GTP-binding protein Di-Ras1 (Diras1) (Mus musculus (Mouse)).